The following is a 709-amino-acid chain: Fatty acid oxidation complex subunit alpha (709 aa).

The enoyl-CoA hydratase stretch occupies residues 1 to 188 (MEKTFNLTRR…KMGLVNDVVP (188 aa)). The interval 308 to 709 (RKVKKAVILG…EMAAEKTRFF (402 aa)) is 3-hydroxyacyl-CoA dehydrogenase.

The protein in the N-terminal section; belongs to the enoyl-CoA hydratase/isomerase family. It in the central section; belongs to the 3-hydroxyacyl-CoA dehydrogenase family. In terms of assembly, heterotetramer of two alpha chains (FadJ) and two beta chains (FadI).

Its subcellular location is the cytoplasm. It catalyses the reaction a (3S)-3-hydroxyacyl-CoA = a (2E)-enoyl-CoA + H2O. The enzyme catalyses a 4-saturated-(3S)-3-hydroxyacyl-CoA = a (3E)-enoyl-CoA + H2O. The catalysed reaction is a (3S)-3-hydroxyacyl-CoA + NAD(+) = a 3-oxoacyl-CoA + NADH + H(+). It carries out the reaction (3S)-3-hydroxybutanoyl-CoA = (3R)-3-hydroxybutanoyl-CoA. The protein operates within lipid metabolism; fatty acid beta-oxidation. Catalyzes the formation of a hydroxyacyl-CoA by addition of water on enoyl-CoA. Also exhibits 3-hydroxyacyl-CoA epimerase and 3-hydroxyacyl-CoA dehydrogenase activities. This chain is Fatty acid oxidation complex subunit alpha, found in Shewanella sp. (strain MR-7).